A 932-amino-acid polypeptide reads, in one-letter code: Glycine dehydrogenase (decarboxylating) (932 aa).

Lys-685 bears the N6-(pyridoxal phosphate)lysine mark.

Belongs to the GcvP family. The glycine cleavage system is composed of four proteins: P, T, L and H. Pyridoxal 5'-phosphate serves as cofactor.

The enzyme catalyses N(6)-[(R)-lipoyl]-L-lysyl-[glycine-cleavage complex H protein] + glycine + H(+) = N(6)-[(R)-S(8)-aminomethyldihydrolipoyl]-L-lysyl-[glycine-cleavage complex H protein] + CO2. Functionally, the glycine cleavage system catalyzes the degradation of glycine. The P protein binds the alpha-amino group of glycine through its pyridoxal phosphate cofactor; CO(2) is released and the remaining methylamine moiety is then transferred to the lipoamide cofactor of the H protein. This is Glycine dehydrogenase (decarboxylating) from Brucella canis (strain ATCC 23365 / NCTC 10854 / RM-666).